The chain runs to 152 residues: Inner membrane protein YbbJ (152 aa).

The chain crosses the membrane as a helical span at residues 1 to 21; sequence MMELMVVHPHIFWLSLGGLLL. The Cytoplasmic segment spans residues 22 to 31; it reads AAEMLGGNGY. Residues 32–52 form a helical membrane-spanning segment; that stretch reads LLWSGVAAVITGLVVWLVPLG. The Periplasmic segment spans residues 53-54; the sequence is WE. A helical membrane pass occupies residues 55-75; the sequence is WQGVMFAILTLLAAWLWWKWL. Over 76–152 the chain is Cytoplasmic; it reads SRRVREQKHS…ITLHIRAVSS (77 aa).

To M.jannaschii MJ0826.

It is found in the cell inner membrane. The sequence is that of Inner membrane protein YbbJ (ybbJ) from Escherichia coli (strain K12).